The primary structure comprises 1032 residues: ATPase MORC2 (1032 aa).

At alanine 2 the chain carries N-acetylalanine. ATP is bound by residues asparagine 39, 87–89, and 99–105; these read SAK and QYGNGLK. Residue asparagine 39 participates in Mg(2+) binding. The stretch at 282–362 forms a coiled coil; it reads SRFKTRAEQE…KEAKQRALKE (81 aa). Position 427 (lysine 427) interacts with ATP. The CW-type zinc-finger motif lies at 490–544; the sequence is AMEIPTTIQCDLCLKWRTLPFQLSSVEKDYPDTWVCSMNPDPEQDRCEASEQKQK. Residues cysteine 499, cysteine 502, cysteine 525, and cysteine 536 each coordinate Zn(2+). Disordered regions lie at residues 530–563 and 577–793; these read DPEQ…KQKQ and ALQK…RAQK. Composition is skewed to basic and acidic residues over residues 532 to 543 and 550 to 563; these read EQDRCEASEQKQ and FRKD…KQKQ. Residues 547 to 584 are a coiled coil; it reads LGTFRKDMKTQEEKQKQLTEKIRQQQEKLEALQKTTPI. Threonine 582 is subject to Phosphothreonine. Serine 602 and serine 615 each carry phosphoserine. Residues 627-638 are compositionally biased toward pro residues; that stretch reads SRPPSLPTPRPA. Residue lysine 652 forms a Glycyl lysine isopeptide (Lys-Gly) (interchain with G-Cter in SUMO2) linkage. A compositionally biased stretch (low complexity) spans 690–704; the sequence is PLVQQLSPSLLPNSK. Serine 696 carries the phosphoserine modification. Lysine 704 participates in a covalent cross-link: Glycyl lysine isopeptide (Lys-Gly) (interchain with G-Cter in SUMO2). Serine 705 carries the phosphoserine modification. Residues 711 to 720 show a composition bias toward low complexity; that stretch reads SPKVIKTPVV. Residue lysine 716 forms a Glycyl lysine isopeptide (Lys-Gly) (interchain with G-Cter in SUMO2) linkage. Residues serine 725 and serine 730 each carry the phosphoserine modification. Phosphothreonine is present on threonine 733. A Phosphoserine; by PAK1 modification is found at serine 739. Positions 741–761 form a coiled coil; that stretch reads AVSDEEEVEEEAERRKERCKR. Phosphoserine is present on serine 743. The span at 765 to 774 shows a compositional bias: basic and acidic residues; the sequence is VVKEEKKDSN. A Glycyl lysine isopeptide (Lys-Gly) (interchain with G-Cter in SUMO2) cross-link involves residue lysine 767. Serine 777 and serine 779 each carry phosphoserine. Lysine 819 participates in a covalent cross-link: Glycyl lysine isopeptide (Lys-Gly) (interchain with G-Cter in SUMO2). Positions 850 to 870 are disordered; that stretch reads RLMKPPSPEHQSLDTQQEGGE. Lysine 932 is covalently cross-linked (Glycyl lysine isopeptide (Lys-Gly) (interchain with G-Cter in SUMO2)). Positions 966 to 1016 form a coiled coil; that stretch reads QSRADSRAKASEESLRTSERKLRETEEKLQKLRTNIVALLQKVQEDIDINT.

In terms of assembly, homodimerizes upon ATP-binding and dissociate upon ATP hydrolysis; homodimerization is required for gene silencing. Interacts with HDAC4. Interacts with ACLY. Interacts with TASOR and MPHOSPH8; the interactions associate MORC2 with the HUSH complex which recruits MORC2 to heterochromatic loci. Post-translationally, phosphorylated by PAK1 at Ser-739 upon DNA damage. Phosphorylation is required for ATPase activity and recruitment to damaged chromatin. As to expression, highly expressed in smooth muscle, pancreas and testis.

Its subcellular location is the nucleus. The protein resides in the cytoplasm. It localises to the cytosol. The protein localises to the chromosome. It is found in the nucleus matrix. It carries out the reaction ATP + H2O = ADP + phosphate + H(+). ATPase activity is dependent of phosphorylation by PAK1 and presence of DNA. Essential for epigenetic silencing by the HUSH (human silencing hub) complex. Recruited by HUSH to target site in heterochromatin, the ATPase activity and homodimerization are critical for HUSH-mediated silencing. Represses germ cell-related genes and L1 retrotransposons in collaboration with SETDB1 and the HUSH complex, the silencing is dependent of repressive epigenetic modifications, such as H3K9me3 mark. Silencing events often occur within introns of transcriptionally active genes, and lead to the down-regulation of host gene expression. During DNA damage response, regulates chromatin remodeling through ATP hydrolysis. Upon DNA damage, is phosphorylated by PAK1, both colocalize to chromatin and induce H2AX expression. ATPase activity is required and dependent of phosphorylation by PAK1 and presence of DNA. Recruits histone deacetylases, such as HDAC4, to promoter regions, causing local histone H3 deacetylation and transcriptional repression of genes such as CA9. Exhibits a cytosolic function in lipogenesis, adipogenic differentiation, and lipid homeostasis by increasing the activity of ACLY, possibly preventing its dephosphorylation. The polypeptide is ATPase MORC2 (Homo sapiens (Human)).